The sequence spans 406 residues: Cysteine desulfurase (406 aa).

N6-(pyridoxal phosphate)lysine is present on Lys-226. The Cysteine persulfide intermediate role is filled by Cys-364.

This sequence belongs to the class-V pyridoxal-phosphate-dependent aminotransferase family. Csd subfamily. Homodimer. Interacts with SufE and the SufBCD complex composed of SufB, SufC and SufD. The interaction with SufE is required to mediate the direct transfer of the sulfur atom from the S-sulfanylcysteine. Pyridoxal 5'-phosphate is required as a cofactor.

The protein resides in the cytoplasm. The enzyme catalyses (sulfur carrier)-H + L-cysteine = (sulfur carrier)-SH + L-alanine. It catalyses the reaction L-selenocysteine + AH2 = hydrogenselenide + L-alanine + A + H(+). It participates in cofactor biosynthesis; iron-sulfur cluster biosynthesis. Cysteine desulfurases mobilize the sulfur from L-cysteine to yield L-alanine, an essential step in sulfur metabolism for biosynthesis of a variety of sulfur-containing biomolecules. Component of the suf operon, which is activated and required under specific conditions such as oxidative stress and iron limitation. Acts as a potent selenocysteine lyase in vitro, that mobilizes selenium from L-selenocysteine. Selenocysteine lyase activity is however unsure in vivo. The polypeptide is Cysteine desulfurase (Salmonella agona (strain SL483)).